Here is a 450-residue protein sequence, read N- to C-terminus: Putative receptor-like protein kinase At1g72540 (450 aa).

A Phosphothreonine modification is found at T73. Residues 84 to 365 form the Protein kinase domain; sequence FSKYNFLGEG…TVVKTLEPIL (282 aa). ATP is bound by residues 90-98 and K119; that span reads LGEGGFGEV. Phosphotyrosine is present on Y164. The active-site Proton acceptor is D214. Residue S218 is modified to Phosphoserine. T254 is subject to Phosphothreonine. Y262 carries the phosphotyrosine modification.

This sequence belongs to the protein kinase superfamily. Ser/Thr protein kinase family.

It carries out the reaction L-seryl-[protein] + ATP = O-phospho-L-seryl-[protein] + ADP + H(+). The enzyme catalyses L-threonyl-[protein] + ATP = O-phospho-L-threonyl-[protein] + ADP + H(+). This Arabidopsis thaliana (Mouse-ear cress) protein is Putative receptor-like protein kinase At1g72540.